Consider the following 402-residue polypeptide: Oxysterol-binding protein 8 (402 aa).

Residues 328–361 adopt a coiled-coil conformation; sequence DRIALEEGNLDVAAKEKHNLEEKQREDKRQRVAE.

Belongs to the OSBP family.

The polypeptide is Oxysterol-binding protein 8 (osbH) (Dictyostelium discoideum (Social amoeba)).